The sequence spans 145 residues: Deoxyuridine 5'-triphosphate nucleotidohydrolase (145 aa).

Substrate is bound by residues 62–64 (RSG), asparagine 75, 79–81 (TVD), and lysine 89.

This sequence belongs to the dUTPase family. Requires Mg(2+) as cofactor.

The catalysed reaction is dUTP + H2O = dUMP + diphosphate + H(+). The protein operates within pyrimidine metabolism; dUMP biosynthesis; dUMP from dCTP (dUTP route): step 2/2. This enzyme is involved in nucleotide metabolism: it produces dUMP, the immediate precursor of thymidine nucleotides and it decreases the intracellular concentration of dUTP so that uracil cannot be incorporated into DNA. The polypeptide is Deoxyuridine 5'-triphosphate nucleotidohydrolase (Helicobacter pylori (strain J99 / ATCC 700824) (Campylobacter pylori J99)).